A 212-amino-acid chain; its full sequence is MARCCKCPRLHLAVTVLACVLVFTEGVNLNDLLDRASQLSDKMHSLSTSLTNDLDSHFSSVGGKLMRPSMCHTSSLQIPNDKDQALSVPEGELLSLVRSLLMAWSDPLALLSSEATSLPHPERNSINTKTRELQDHTNSLGAGLERLGRKMGSSPESLSSLPFNSNDLGQDNISRLVNFHFLLSCFRRDSHKIDSFLKVLRCDAAKMLPEMC.

The N-terminal stretch at 1-26 (MARCCKCPRLHLAVTVLACVLVFTEG) is a signal peptide. Disulfide bonds link C71/C185 and C202/C212.

The protein belongs to the somatotropin/prolactin family. As to expression, pituitary gland.

The protein localises to the secreted. This chain is Prolactin (prl), found in Ictalurus punctatus (Channel catfish).